We begin with the raw amino-acid sequence, 698 residues long: Iron-sulfur clusters transporter ATM1, mitochondrial (698 aa).

A mitochondrion-targeting transit peptide spans 1-23 (MIPQLLQRSSRACPRYNPALYRL). Over 24–113 (STTSQQRPGL…PKDDWGTKLR (90 aa)) the chain is Mitochondrial matrix. A disordered region spans residues 32-63 (GLTQTFWTSAPRREQPRTPTDSKPTTTKPSAV). Low complexity predominate over residues 48 to 61 (RTPTDSKPTTTKPS). A helical transmembrane segment spans residues 114–135 (VSLAVSLLIGAKVLNVQVPFYF). Residues 114 to 404 (VSLAVSLLIG…LGSVYRELRQ (291 aa)) enclose the ABC transmembrane type-1 domain. Residues 136 to 158 (KSIVDSMNIDVAAVGGTATTVAG) are Mitochondrial intermembrane-facing. Residues 159–182 (AMILAYGASRIGATVFQELRNAVF) form a helical membrane-spanning segment. The Mitochondrial matrix segment spans residues 183 to 231 (ASVAQNAIRKVACNVFDHLLRLDLTFHLSKQTGGLTRALDRGTKGISFI). A helical membrane pass occupies residues 232–255 (LSSMVFHVLPTALEISMVCGILTY). Residue N256 is a topological domain, mitochondrial intermembrane. The chain crosses the membrane as a helical span at residues 257-277 (YGAKFAALTVLTMVSYTAFTI). Topologically, residues 278 to 343 (WTTAWRTKFR…NSIKVATSLA (66 aa)) are mitochondrial matrix. Glutathione contacts are provided by residues 283–287 (RTKFR) and 346–349 (NSGQ). A helical transmembrane segment spans residues 344-362 (LLNSGQNIIFSSALTGMMY). The Mitochondrial intermembrane segment spans residues 363 to 377 (LAANGVAEGTLTVGD). A helical membrane pass occupies residues 378-399 (LVMVNQLVFQLSVPLNFLGSVY). Residue G396 coordinates glutathione. Residues 400-698 (RELRQSLLDM…EEENDEQKKN (299 aa)) lie on the Mitochondrial matrix side of the membrane. The 237-residue stretch at 439–675 (IKFENVNFAY…DGVYAELWSA (237 aa)) folds into the ABC transporter domain. Residues Y448 and 472-483 (GPSGCGKSTLLR) each bind ATP. A disordered region spans residues 679–698 (MFGEDGKEKSEEENDEQKKN). Over residues 682 to 698 (EDGKEKSEEENDEQKKN) the composition is skewed to basic and acidic residues.

This sequence belongs to the ABC transporter superfamily. ABCB family. Heavy Metal importer (TC 3.A.1.210) subfamily. Homodimer.

Its subcellular location is the mitochondrion inner membrane. Its function is as follows. Performs an essential function in the generation of cytoplasmic iron-sulfur proteins by mediating the ATP-dependent export of Fe/S cluster precursors synthesized by NFS1 and other mitochondrial proteins. Hydrolyzes ATP. Binds glutathione and may function by transporting a glutathione-conjugated iron-sulfur compound. The protein is Iron-sulfur clusters transporter ATM1, mitochondrial of Gibberella zeae (strain ATCC MYA-4620 / CBS 123657 / FGSC 9075 / NRRL 31084 / PH-1) (Wheat head blight fungus).